The sequence spans 695 residues: Nucleoprotein (695 aa).

Coiled-coil stretches lie at residues 316 to 341 (VNVG…RRHE) and 372 to 399 (QTLA…VEDQ). Disordered regions lie at residues 423 to 458 (VQAR…SFVD), 483 to 515 (TSRE…TNPI), and 527 to 612 (PVQE…DTRA). 2 stretches are compositionally biased toward polar residues: residues 495 to 505 (RQSQDLNNSQG) and 537 to 552 (TTDS…SDNE). The PTAP/PSAP motif signature appears at 603-606 (PSAP).

It belongs to the filoviruses nucleoprotein family. In terms of assembly, homooligomer. Homomultimerizes to form the nucleocapsid. Binds to viral genomic RNA. Interacts with VP35 and VP30 to form the nucleocapsid. Also interacts with VP24 and VP40. Post-translationally, phosphorylated.

Its subcellular location is the virion. The protein localises to the host cytoplasm. Functionally, encapsidates the genome, protecting it from nucleases. The encapsidated genomic RNA is termed the nucleocapsid and serves as template for transcription and replication. During replication, encapsidation by NP is coupled to RNA synthesis and all replicative products are resistant to nucleases. The protein is Nucleoprotein (NP) of Chlorocebus aethiops (Green monkey).